Consider the following 293-residue polypeptide: MTIETLSTQSKAQVLAEALRWLKQLHGRVVVIKYGGNAMTDDTLRQAFAADMAFLRNCGIHPVVVHGGGPQITAMLGKLGIEGDFKGGFRVTTPEVLDVARMVLFGQVGRELVNLINAHGPYAVGVTGEDAQLFTAVRRSVNVDGVATDIGLVGDVDHVNAAALMDLIAAHRIPVISTLAPDAEGVVHNINADTAAAAVAEALGAEKLLMLTDVEGLYTSWPDRDSLVREIDTAALEQLLPRLEAGMIPKVEGCLRAVTGGVPSAHVIDGRVEHCVLVELFTNAGTGTKVVSA.

Residues 68 to 69, R90, and N189 contribute to the substrate site; that span reads GG.

This sequence belongs to the acetylglutamate kinase family. ArgB subfamily.

It is found in the cytoplasm. The enzyme catalyses N-acetyl-L-glutamate + ATP = N-acetyl-L-glutamyl 5-phosphate + ADP. Its pathway is amino-acid biosynthesis; L-arginine biosynthesis; N(2)-acetyl-L-ornithine from L-glutamate: step 2/4. In terms of biological role, catalyzes the ATP-dependent phosphorylation of N-acetyl-L-glutamate. The chain is Acetylglutamate kinase from Mycobacterium ulcerans (strain Agy99).